The following is a 225-amino-acid chain: Flagellar transcriptional regulator FlhC (225 aa).

Cys-149, Cys-152, Cys-169, and Cys-172 together coordinate Zn(2+).

It belongs to the FlhC family. In terms of assembly, heterohexamer composed of two FlhC and four FlhD subunits. Each FlhC binds a FlhD dimer, forming a heterotrimer, and a hexamer assembles by dimerization of two heterotrimers. The cofactor is Zn(2+).

It localises to the cytoplasm. Functions in complex with FlhD as a master transcriptional regulator that regulates transcription of several flagellar and non-flagellar operons by binding to their promoter region. Activates expression of class 2 flagellar genes, including fliA, which is a flagellum-specific sigma factor that turns on the class 3 genes. Also regulates genes whose products function in a variety of physiological pathways. The protein is Flagellar transcriptional regulator FlhC of Burkholderia lata (strain ATCC 17760 / DSM 23089 / LMG 22485 / NCIMB 9086 / R18194 / 383).